A 964-amino-acid polypeptide reads, in one-letter code: MSLSAARSFLSEAAYGEQELDANSALMELDKGLRSCKLGEQCEAVVLFPKLFQKYPFPILINSAFLKLADIFRLGNNFLRLCVLKVTQLSEKHLEKILNVDEFVKRVFSVIHSNDPVARAITLRMLGSLASIIPERKNAHHSIRQSLDSHDNVEVEAAIFAAASFSSHSKDFAAGICNKISEMIQGLDTPVELKLKLIPMLQHMHHDASLASCSRELLQELVSSYPSTSMLIVTLHTFTQLATSSLVDIPEQICLLLQYLKEDPRKAVKRLSIQDLKLLAKKAPHLWTRKNIQVLCECALHTPYNSLKLGMLSVLSTLSGTIAIKQYFSPNAGDSSPAPHHTDLVKLAQECCYHSDLAVAAHGITVLTSIAAFCPEKEVIQLEQETVMGMESLILLCSQDDSKTAQATLKTALTSLVQMLKTCPHLSQSSVELLLRQLHCACDPARVLMCQALAAIATQQPVLVEGMLGDLLELFRVASHRTSEKQQELLVSLATVLFVASQASLSAEVKAVIRQQLENVANGWTVYQIARQASRMGCHDFSRELYQSLRTRVASEHFYFWLNSLMEFSQAEQCLSGLEDGDYSAAMSAISEALKSYQKGIASLTAASTPLSPLTFQCEFVKLRIDTLQALSQLICTCNSLKTSPPPAIATTIALSSGSDLQRCGRISTQMKFSMDEFRSLAARYADLYQSSFDADYATLRNVELQQQSCLLVSYVIEALIIDPQTASFQEFGTHGSILAESEYELRMMAVFNHVLEEVENLSRKHPPVSYLHTGCLCDTVIAILKIPLSFQRYFFQKLQSTSIKLALSPSPRTPNEPIPVQNNQQLTLKVEGVIQHGSSPGLFRKIQAVCLKVSSTLQTKPGSDFKIPLESKTNEIEQKVEPHNDYFSTQFLLNFSILGTHQVSVEASVVDTSGIEWKTGPKNTVSVKSLEDPYSQQLRHQLQQQQQNVPQPAAQRNISTRFQ.

The span at 937–958 (QQLRHQLQQQQQNVPQPAAQRN) shows a compositional bias: low complexity. The interval 937 to 964 (QQLRHQLQQQQQNVPQPAAQRNISTRFQ) is disordered.

Belongs to the Integrator subunit 7 family. Component of the Integrator complex, composed of core subunits INTS1, INTS2, INTS3, INTS4, INTS5, INTS6, INTS7, INTS8, INTS9/RC74, INTS10, INTS11/CPSF3L, INTS12, INTS13, INTS14 and INTS15. The core complex associates with protein phosphatase 2A subunits PPP2CA and PPP2R1A, to form the Integrator-PP2A (INTAC) complex.

It is found in the nucleus. It localises to the chromosome. The protein resides in the cytoplasm. Its function is as follows. Component of the integrator complex, a multiprotein complex that terminates RNA polymerase II (Pol II) transcription in the promoter-proximal region of genes. The integrator complex provides a quality checkpoint during transcription elongation by driving premature transcription termination of transcripts that are unfavorably configured for transcriptional elongation: the complex terminates transcription by (1) catalyzing dephosphorylation of the C-terminal domain (CTD) of Pol II subunit POLR2A/RPB1 and SUPT5H/SPT5, (2) degrading the exiting nascent RNA transcript via endonuclease activity and (3) promoting the release of Pol II from bound DNA. The integrator complex is also involved in terminating the synthesis of non-coding Pol II transcripts, such as enhancer RNAs (eRNAs), small nuclear RNAs (snRNAs), telomerase RNAs and long non-coding RNAs (lncRNAs). Essential during embryogenesis for eye development. This chain is Integrator complex subunit 7 (ints7), found in Danio rerio (Zebrafish).